An 815-amino-acid chain; its full sequence is MDVQYRPDQIEAQAQQYWDDNQSFKVTEDASKEKFYCLSMFPYPSGRLHMGHVRNYSIGDVVSRYQRMLGKNVLQPMGWDAFGLPAENAAIKNKVAPAKWTFENIDYMRGQLQRLGFGYDWGRELATCTPEYYRWEQWFFTKLYEKGLVYRKMSTVNWDPVDQTVLANEQVIDGRGWRSGALVEQKEIPQWFIKITDYADELLNDLDQLDGWPEQVKTMQRNWIGRSEGVELDFPIEGEESLRVYTTRPDTLMGVSYVAVAAGHPLAQKAAAANHEVADFIKECQNTKTAEADMATMEKKGIYTGLTATHPISGEAVPVWIANFVLMGYGTGAVMAVPAHDQRDFEFAQKYGLPINQVIEPANGEPIDLALEAFTGKGTLIHSGEFDGLSSAEAFNAIANWLSERSLGEKKVNYRLRDWGVSRQRYWGTPIPMVETEDGTLHPTPEDQLPVALPTDVEMDGVTSPIKADPEWAKTTFNGQPALRETDTFDTFMESSWYYARYCSPQSDTAMLDPAATNYWLPVDQYIGGIEHAILHLLYSRFFHKLLRDTGLVNCDEPFKQLLCQGMVLKDGAKMSKSKGNTVDPQQMIEEYGADTVRLFMMFAAPPEQSLEWNDAGVEGAFRFIKRLWRLVAEHVEAGNTGTLDVNALDDAGKALRRKTHETIQKVSDDYGRRNTFNTAIAAVMELINEVSKFDAATDNALAVKQEALEAAVLLLAPIIPHAGHSLWQALGHDEAVIDASWPSVDESALVKDSIELVVQVNGKVRAKLNVPANADKASVESLAMDEPNVKKFTEGKTVRKVIVVPGKLVNIVAN.

Positions 42 to 52 (PYPSGRLHMGH) match the 'HIGH' region motif. Residues 574–578 (KMSKS) carry the 'KMSKS' region motif. Residue K577 participates in ATP binding.

It belongs to the class-I aminoacyl-tRNA synthetase family.

It localises to the cytoplasm. It catalyses the reaction tRNA(Leu) + L-leucine + ATP = L-leucyl-tRNA(Leu) + AMP + diphosphate. In Alcanivorax borkumensis (strain ATCC 700651 / DSM 11573 / NCIMB 13689 / SK2), this protein is Leucine--tRNA ligase.